The following is a 546-amino-acid chain: MSSRQTLASWKKLQLLAQDKKSQHMNTLFAQDSERFNKFSIELPNMLLDYSKNLIDTETLDALLALAEETQVCDWRAKMFAGEKINKTEDRAVLHTALRRQSDEAFIIEGENVTEHVKNQLAEMEVFVNKVRQGHWLGYSGKRITDIVNIGVGGSNLGPQMVTEALKHYSDGSVNVHYVSNVDGAQIAEVLRPLEPEKVLFIVSSKTFTTTETMTNARTAINWLTSASFDENSVAKHFVAVTANKENAMSFGIEEQNIFDMWDWVGGRFSLWSAIGLAIALDLGFDKFEELLAGAHDMDQHFINAPLKDNFPAILALISVWNTTFLGSQSQAILPYDQTLHMLTAYLQQAEMESNGKSVSWDGDEIDYATVPSIWGELGINGQHAFYQYLHQSNNVVPADFIGSVKSVTPVKGHHETLMANFFAQTQALMVGVNEEQVRADLKAKGRNAEYIDNVAPHKVHKGNRPTNTILLKCINPRNLGSLIAAYEHKIFVQGIILQICSFDQWGVELGKGLAAEIQTELQTDNISAQHDCSTSSLLKFYQSAK.

The active-site Proton donor is the E353. Residues H384 and K512 contribute to the active site.

Belongs to the GPI family.

It is found in the cytoplasm. The enzyme catalyses alpha-D-glucose 6-phosphate = beta-D-fructose 6-phosphate. The protein operates within carbohydrate biosynthesis; gluconeogenesis. It participates in carbohydrate degradation; glycolysis; D-glyceraldehyde 3-phosphate and glycerone phosphate from D-glucose: step 2/4. Functionally, catalyzes the reversible isomerization of glucose-6-phosphate to fructose-6-phosphate. This chain is Glucose-6-phosphate isomerase 1, found in Colwellia psychrerythraea (strain 34H / ATCC BAA-681) (Vibrio psychroerythus).